We begin with the raw amino-acid sequence, 350 residues long: Small ribosomal subunit protein uS3 (350 aa).

The KH type-2 domain maps to isoleucine 38–lysine 106. The segment at alanine 211–glutamate 350 is disordered. Residues glutamine 222–proline 232 show a composition bias toward basic residues. Residues asparagine 261–glutamate 350 are compositionally biased toward low complexity.

This sequence belongs to the universal ribosomal protein uS3 family. In terms of assembly, part of the 30S ribosomal subunit. Forms a tight complex with proteins S10 and S14.

Binds the lower part of the 30S subunit head. Binds mRNA in the 70S ribosome, positioning it for translation. This Frankia alni (strain DSM 45986 / CECT 9034 / ACN14a) protein is Small ribosomal subunit protein uS3.